We begin with the raw amino-acid sequence, 863 residues long: DNA-directed RNA polymerase subunit beta' (863 aa).

The tract at residues M1–Q83 is disordered. Polar residues predominate over residues E23–K36. Zn(2+)-binding residues include C159, C161, C180, and C183. Mg(2+)-binding residues include D621, D623, and D625.

The protein belongs to the RNA polymerase beta' chain family. RpoC1 subfamily. As to quaternary structure, in plastids the minimal PEP RNA polymerase catalytic core is composed of four subunits: alpha, beta, beta', and beta''. When a (nuclear-encoded) sigma factor is associated with the core the holoenzyme is formed, which can initiate transcription. The cofactor is Mg(2+). It depends on Zn(2+) as a cofactor.

Its subcellular location is the plastid. It is found in the chloroplast. It catalyses the reaction RNA(n) + a ribonucleoside 5'-triphosphate = RNA(n+1) + diphosphate. In terms of biological role, DNA-dependent RNA polymerase catalyzes the transcription of DNA into RNA using the four ribonucleoside triphosphates as substrates. This Nephroselmis olivacea (Green alga) protein is DNA-directed RNA polymerase subunit beta'.